The following is a 1237-amino-acid chain: uncharacterized protein (1237 aa).

The region spanning 591–712 (KDMLEIYSDL…IVLSKYTQWT (122 aa)) is the MHD1 domain. Positions 786 to 906 (LIEALDVAES…GDYLPREEWF (121 aa)) constitute a C2 domain. One can recognise an MHD2 domain in the interval 1014 to 1130 (EAAIYELLDY…KPTDFLLQEC (117 aa)).

This is an uncharacterized protein from Schizosaccharomyces pombe (strain 972 / ATCC 24843) (Fission yeast).